The primary structure comprises 1030 residues: MMS19 nucleotide excision repair protein homolog (1030 aa).

Ala2 carries the post-translational modification N-acetylalanine. Lys496 is subject to N6-acetyllysine. HEAT repeat units lie at residues 866 to 904 (QRFF…RLPK), 908 to 946 (LPEL…EAPQ), 949 to 987 (SLHV…LPTP), and 990 to 1028 (LPYK…LGSP). Ser1027 is modified (phosphoserine).

This sequence belongs to the MET18/MMS19 family. In terms of assembly, component of the CIA complex. In the CIA complex, interacts directly with CIAO2B and CIAO3. Component of the MMXD complex, composed of CIAO1, ERCC2, CIAO2B, MMS19 and SLC25A5. Interacts with CIAO2B; the interaction is direct. Interacts with ERCC2/XPD; the interaction is direct. Interacts with ERCC3/XPB and NCOA3/RAC3. Interacts with RTEL1; the interaction mediates the association of RTEL1 with the CIA complex. Interacts with BRIP1. Interacts with KIF4A; the interaction facilitates the transfer of Fe-S clusters to KIF4A to ensure proper localization of KIF4A to the mitotic machinery components. Interacts with CCDC117; the interaction is indirect. In terms of processing, ubiquitinated; undergoes 'Lys-48'-linked polyubiquitination by MAGEF1-NSMCE1 ubiquitin ligase complex leading to proteasomal degradation. Ubiquitously expressed with higher expression in testis.

It is found in the nucleus. Its subcellular location is the cytoplasm. It localises to the cytoskeleton. The protein resides in the spindle. The protein localises to the microtubule organizing center. It is found in the centrosome. Its function is as follows. Key component of the cytosolic iron-sulfur protein assembly (CIA) complex, a multiprotein complex that mediates the incorporation of iron-sulfur cluster into apoproteins specifically involved in DNA metabolism and genomic integrity. In the CIA complex, MMS19 acts as an adapter between early-acting CIA components and a subset of cellular target iron-sulfur proteins such as ERCC2/XPD, FANCJ and RTEL1, thereby playing a key role in nucleotide excision repair (NER), homologous recombination-mediated double-strand break DNA repair, DNA replication and RNA polymerase II (POL II) transcription. As part of the mitotic spindle-associated MMXD complex, plays a role in chromosome segregation, probably by facilitating iron-sulfur (Fe-S) cluster assembly into ERCC2/XPD. Together with CIAO2, facilitates the transfer of Fe-S clusters to the motor protein KIF4A, which ensures proper localization of KIF4A to mitotic machinery components to promote the progression of mitosis. Indirectly acts as a transcriptional coactivator of estrogen receptor (ER), via its role in iron-sulfur insertion into some component of the TFIIH-machinery. The polypeptide is MMS19 nucleotide excision repair protein homolog (Homo sapiens (Human)).